The following is a 532-amino-acid chain: Membrane protein insertase YidC (532 aa).

Transmembrane regions (helical) follow at residues 7–27, 336–356, 413–433, 450–470, and 492–512; these read FFIFAFLFVSFLLWQAWQSQM, LTILYSIIGNWGFSIILITFI, GGFLPIFIQMPIFLSLYYMLI, LSSQDPYYVLPVIMGLTMFFI, and PVIFTAFFLWFPSGLVLYYII.

It belongs to the OXA1/ALB3/YidC family. Type 1 subfamily. Interacts with the Sec translocase complex via SecD. Specifically interacts with transmembrane segments of nascent integral membrane proteins during membrane integration.

The protein resides in the cell membrane. Functionally, required for the insertion and/or proper folding and/or complex formation of integral membrane proteins into the membrane. Involved in integration of membrane proteins that insert both dependently and independently of the Sec translocase complex, as well as at least some lipoproteins. Aids folding of multispanning membrane proteins. The sequence is that of Membrane protein insertase YidC from Buchnera aphidicola subsp. Acyrthosiphon pisum (strain 5A).